The following is a 413-amino-acid chain: Dolichyl-diphosphooligosaccharide--protein glycosyltransferase 48 kDa subunit (413 aa).

Residues 1–383 are Lumenal-facing; sequence GPRSLVLLEN…QYERFIPSAY (383 aa). The helical transmembrane segment at 384 to 404 threads the bilayer; the sequence is PYYAGAFSMMVGLFMFSIVFL. Over 405-413 the chain is Cytoplasmic; it reads HMKEKEKSD.

Belongs to the DDOST 48 kDa subunit family. Component of the oligosaccharyltransferase (OST) complex.

The protein resides in the endoplasmic reticulum. The protein localises to the endoplasmic reticulum membrane. Its pathway is protein modification; protein glycosylation. Subunit of the oligosaccharyl transferase (OST) complex that catalyzes the initial transfer of a defined glycan (Glc(3)Man(9)GlcNAc(2) in eukaryotes) from the lipid carrier dolichol-pyrophosphate to an asparagine residue within an Asn-X-Ser/Thr consensus motif in nascent polypeptide chains, the first step in protein N-glycosylation. N-glycosylation occurs cotranslationally and the complex associates with the Sec61 complex at the channel-forming translocon complex that mediates protein translocation across the endoplasmic reticulum (ER). All subunits are required for a maximal enzyme activity. Required for the assembly of both SST3A- and SS3B-containing OST complexes. This chain is Dolichyl-diphosphooligosaccharide--protein glycosyltransferase 48 kDa subunit, found in Gallus gallus (Chicken).